Consider the following 360-residue polypeptide: DNA replication and repair protein RecF (360 aa).

ATP is bound at residue 30–37 (GHNGSGKT).

It belongs to the RecF family.

The protein resides in the cytoplasm. In terms of biological role, the RecF protein is involved in DNA metabolism; it is required for DNA replication and normal SOS inducibility. RecF binds preferentially to single-stranded, linear DNA. It also seems to bind ATP. This chain is DNA replication and repair protein RecF, found in Shewanella sediminis (strain HAW-EB3).